A 284-amino-acid polypeptide reads, in one-letter code: MTNKTVKIGNIDVANHKPFVLFGGMNVLESRDMAMQVCEKYVEVTDKLGVPYVFKASFDKANRSSIHSYRGPGMEEGLKIFQELKKTFGVKVIADVHEIYQCNPVAEVVDVIQLPAFLARQTDLVEAMARTGAVINVKKPQFLSPGQMGNIVEKIEECGNDKVILCDRGTNFGYDNLVVDMLGFGVMKKASKGCPVIFDVTHSLQCRDPFGAASGGRREQVTELARAGMAVGIAGLFLEAHPDPNNAKCDGPSALPLSALEGFVVQMKAIDELVKSFPELDTSK.

The protein belongs to the KdsA family.

It is found in the cytoplasm. The enzyme catalyses D-arabinose 5-phosphate + phosphoenolpyruvate + H2O = 3-deoxy-alpha-D-manno-2-octulosonate-8-phosphate + phosphate. Its pathway is carbohydrate biosynthesis; 3-deoxy-D-manno-octulosonate biosynthesis; 3-deoxy-D-manno-octulosonate from D-ribulose 5-phosphate: step 2/3. It functions in the pathway bacterial outer membrane biogenesis; lipopolysaccharide biosynthesis. The protein is 2-dehydro-3-deoxyphosphooctonate aldolase of Actinobacillus succinogenes (strain ATCC 55618 / DSM 22257 / CCUG 43843 / 130Z).